The sequence spans 336 residues: Holliday junction branch migration complex subunit RuvB (336 aa).

A large ATPase domain (RuvB-L) region spans residues 4–185 (ADRLISADIQ…FGIVQRLEFY (182 aa)). ATP is bound by residues isoleucine 24, arginine 25, glycine 66, lysine 69, threonine 70, threonine 71, 132 to 134 (EDY), arginine 175, tyrosine 185, and arginine 222. Threonine 70 is a binding site for Mg(2+). Residues 186-256 (NVDDLQHIVA…IASKALDMLN (71 aa)) are small ATPAse domain (RuvB-S). The head domain (RuvB-H) stretch occupies residues 259–336 (AAGFDYLDRK…RHFNRIMEAP (78 aa)). Residues arginine 295, arginine 314, and arginine 319 each contribute to the DNA site.

This sequence belongs to the RuvB family. In terms of assembly, homohexamer. Forms an RuvA(8)-RuvB(12)-Holliday junction (HJ) complex. HJ DNA is sandwiched between 2 RuvA tetramers; dsDNA enters through RuvA and exits via RuvB. An RuvB hexamer assembles on each DNA strand where it exits the tetramer. Each RuvB hexamer is contacted by two RuvA subunits (via domain III) on 2 adjacent RuvB subunits; this complex drives branch migration. In the full resolvosome a probable DNA-RuvA(4)-RuvB(12)-RuvC(2) complex forms which resolves the HJ.

It is found in the cytoplasm. The enzyme catalyses ATP + H2O = ADP + phosphate + H(+). The RuvA-RuvB-RuvC complex processes Holliday junction (HJ) DNA during genetic recombination and DNA repair, while the RuvA-RuvB complex plays an important role in the rescue of blocked DNA replication forks via replication fork reversal (RFR). RuvA specifically binds to HJ cruciform DNA, conferring on it an open structure. The RuvB hexamer acts as an ATP-dependent pump, pulling dsDNA into and through the RuvAB complex. RuvB forms 2 homohexamers on either side of HJ DNA bound by 1 or 2 RuvA tetramers; 4 subunits per hexamer contact DNA at a time. Coordinated motions by a converter formed by DNA-disengaged RuvB subunits stimulates ATP hydrolysis and nucleotide exchange. Immobilization of the converter enables RuvB to convert the ATP-contained energy into a lever motion, pulling 2 nucleotides of DNA out of the RuvA tetramer per ATP hydrolyzed, thus driving DNA branch migration. The RuvB motors rotate together with the DNA substrate, which together with the progressing nucleotide cycle form the mechanistic basis for DNA recombination by continuous HJ branch migration. Branch migration allows RuvC to scan DNA until it finds its consensus sequence, where it cleaves and resolves cruciform DNA. In Proteus mirabilis (strain HI4320), this protein is Holliday junction branch migration complex subunit RuvB.